Here is a 221-residue protein sequence, read N- to C-terminus: Phosphatidylethanolamine-binding protein homolog F40A3.3 (221 aa).

It belongs to the phosphatidylethanolamine-binding protein family.

The sequence is that of Phosphatidylethanolamine-binding protein homolog F40A3.3 from Caenorhabditis elegans.